The sequence spans 24 residues: Waglerin-4 (24 aa).

A disulfide bridge connects residues Cys11 and Cys15.

It belongs to the waglerin family. As to quaternary structure, monomer. In terms of tissue distribution, expressed by the venom gland.

It is found in the secreted. Its function is as follows. Waglerin-2 selectively blocks the epsilon subunit of muscle nicotinic acetylcholine receptor (nAChR). Also has effects on rodent ionotropic GABA(A) receptors (GABR), since it potentiates I(GABA) in some neurons and depresses I(GABA) in others. In mice, it elicits tachypnea, ocular proptosis, rapid collapse and spasms, whereas no toxic effects on respiration and blood pressure are observed in rats. Waglerin-4 selectively blocks the epsilon subunit of muscle nicotinic acetylcholine receptor. It elicits tachypnea, ocular proptosis, rapid collapse and spasms in mice. It causes death by respiratory failure. This is Waglerin-4 from Tropidolaemus wagleri (Wagler's pit viper).